Consider the following 76-residue polypeptide: Protein RALF-like 26 (76 aa).

Positions Met-1–Ala-22 are cleaved as a signal peptide. The cysteines at positions 37 and 46 are disulfide-linked. Asn-61 carries N-linked (GlcNAc...) asparagine glycosylation. Cysteines 66 and 72 form a disulfide.

It belongs to the plant rapid alkalinization factor (RALF) family.

Its subcellular location is the secreted. Its function is as follows. Cell signaling peptide that may regulate plant stress, growth, and development. Mediates a rapid alkalinization of extracellular space by mediating a transient increase in the cytoplasmic Ca(2+) concentration leading to a calcium-dependent signaling events through a cell surface receptor and a concomitant activation of some intracellular mitogen-activated protein kinases. This Arabidopsis thaliana (Mouse-ear cress) protein is Protein RALF-like 26 (RALFL26).